We begin with the raw amino-acid sequence, 4835 residues long: Midasin (4835 aa).

AAA-ATPase protomer regions lie at residues 12–161 (EVLR…PLVL), 324–689 (RSLD…HRFR), 797–1049 (MTTI…AEII), 1096–1375 (KFQD…DYIT), 1489–1738 (APTT…FGYR), and 1821–2110 (ALEA…SIDI). ATP is bound by residues 31-38 (GPSASGRT), 356-363 (GPTGIGKT), 814-821 (GTTSSGKT), 1127-1134 (GVSGAGKT), 1513-1520 (GDPGVGKS), and 1839-1846 (GSPESGKS). Residues 2197-4058 (SVFIASTLNA…DGTGDQNVSK (1862 aa)) are linker. 2 disordered regions span residues 4033-4056 (DQKE…DQNV) and 4108-4523 (IEEE…LLNP). Composition is skewed to acidic residues over residues 4109-4133 (EEED…QGEA), 4141-4150 (EDDDSAEEYS), 4226-4241 (ADGE…EEEQ), 4282-4291 (VDIDDNEASD), and 4315-4330 (NDEE…DQEN). Over residues 4331–4346 (ITDSNPDANEVGTNDQ) the composition is skewed to polar residues. Composition is skewed to basic and acidic residues over residues 4347-4360 (KQTH…RQEN), 4394-4415 (EFQR…KDEA), and 4429-4438 (VEFDDSKSGR). A compositionally biased stretch (polar residues) spans 4468–4477 (HNSSCETSQS). The span at 4478-4488 (SHDRPPAEHLN) shows a compositional bias: basic and acidic residues. The 190-residue stretch at 4629–4818 (QVLLAVDDSS…RHIEDLPETL (190 aa)) folds into the VWFA domain.

Belongs to the midasin family. Associates with pre-60S ribosomes in the nucleoplasm.

Its subcellular location is the nucleus. The protein localises to the nucleolus. The protein resides in the nucleoplasm. Nuclear chaperone required for maturation and nuclear export of pre-60S ribosome subunits. Functions at successive maturation steps to remove ribosomal factors at critical transition points, first driving the exit of early pre-60S particles from the nucleolus and then driving late pre-60S particles from the nucleus. In Giardia intestinalis (Giardia lamblia), this protein is Midasin (MDN1).